The following is a 104-amino-acid chain: Large ribosomal subunit protein bL21 (104 aa).

It belongs to the bacterial ribosomal protein bL21 family. As to quaternary structure, part of the 50S ribosomal subunit. Contacts protein L20.

This protein binds to 23S rRNA in the presence of protein L20. The chain is Large ribosomal subunit protein bL21 from Helicobacter pylori (strain Shi470).